Reading from the N-terminus, the 173-residue chain is Lithostathine-2 (173 aa).

An N-terminal signal peptide occupies residues 1 to 22; the sequence is MAQNNVYLILFLCLMFLSYSQG. The C-type lectin domain occupies 41-171; the sequence is INCPEGANAY…EAQYSFVCKF (131 aa). Cystine bridges form between Cys-43–Cys-54, Cys-71–Cys-169, and Cys-144–Cys-161.

In terms of tissue distribution, expressed only in regenerating islets and normal exocrine pancreas, but not in normal pancreatic islets. Expressed strongly in pancreas, weakly in liver, but not at all in gall bladder.

It localises to the secreted. Its function is as follows. Might act as an inhibitor of spontaneous calcium carbonate precipitation. This is Lithostathine-2 (Reg2) from Mus musculus (Mouse).